Reading from the N-terminus, the 250-residue chain is NADH-quinone oxidoreductase subunit C (250 aa).

It belongs to the complex I 30 kDa subunit family. NDH-1 is composed of 14 different subunits. Subunits NuoB, C, D, E, F, and G constitute the peripheral sector of the complex.

Its subcellular location is the cell inner membrane. It catalyses the reaction a quinone + NADH + 5 H(+)(in) = a quinol + NAD(+) + 4 H(+)(out). Its function is as follows. NDH-1 shuttles electrons from NADH, via FMN and iron-sulfur (Fe-S) centers, to quinones in the respiratory chain. The immediate electron acceptor for the enzyme in this species is believed to be ubiquinone. Couples the redox reaction to proton translocation (for every two electrons transferred, four hydrogen ions are translocated across the cytoplasmic membrane), and thus conserves the redox energy in a proton gradient. The chain is NADH-quinone oxidoreductase subunit C from Xanthomonas oryzae pv. oryzae (strain PXO99A).